Consider the following 304-residue polypeptide: MRYGFDIGGTKIELAVFNDQLEKQYSERVETPKESYEEWLNTIVRLVHKADEMFQCQGTVGLGIPGFVNPATGIAEIVNIRAADHKPIIQDLETRLGREVRAENDANCFALSEAWDEENAQYPSVLGLILGTGFGGGLIFNGKVHSGQTGMAGEVGHTQLNYHALRLLGGDNAPIYDCGCGNRACLDTYLSGRGFEMLYRDMQGEALSAQAIIQRFYAGDQSAVKFVELFIELCAISIGNLITVLDPHVIVLGGGLSNFDYLYEALPKALPARLLRSANVPLIKKAKYGDSGGVRGAAALFLSK.

ATP-binding positions include 4–11 (GFDIGGTK) and 133–140 (GFGGGLIF). Zn(2+) contacts are provided by H157, C178, C180, and C185.

This sequence belongs to the ROK (NagC/XylR) family. NagK subfamily.

It catalyses the reaction N-acetyl-D-glucosamine + ATP = N-acetyl-D-glucosamine 6-phosphate + ADP + H(+). It functions in the pathway cell wall biogenesis; peptidoglycan recycling. Its function is as follows. Catalyzes the phosphorylation of N-acetyl-D-glucosamine (GlcNAc) derived from cell-wall degradation, yielding GlcNAc-6-P. In Pasteurella multocida (strain Pm70), this protein is N-acetyl-D-glucosamine kinase.